The primary structure comprises 502 residues: Glucose-6-phosphate isomerase (502 aa).

Glu-331 acts as the Proton donor in catalysis. Residues His-362 and Lys-471 contribute to the active site.

This sequence belongs to the GPI family.

The protein localises to the cytoplasm. It catalyses the reaction alpha-D-glucose 6-phosphate = beta-D-fructose 6-phosphate. The protein operates within carbohydrate biosynthesis; gluconeogenesis. It functions in the pathway carbohydrate degradation; glycolysis; D-glyceraldehyde 3-phosphate and glycerone phosphate from D-glucose: step 2/4. Functionally, catalyzes the reversible isomerization of glucose-6-phosphate to fructose-6-phosphate. The sequence is that of Glucose-6-phosphate isomerase from Xylella fastidiosa (strain 9a5c).